Reading from the N-terminus, the 215-residue chain is Probable transaldolase (215 aa).

Catalysis depends on K83, which acts as the Schiff-base intermediate with substrate.

Belongs to the transaldolase family. Type 3B subfamily.

Its subcellular location is the cytoplasm. It catalyses the reaction D-sedoheptulose 7-phosphate + D-glyceraldehyde 3-phosphate = D-erythrose 4-phosphate + beta-D-fructose 6-phosphate. It participates in carbohydrate degradation; pentose phosphate pathway; D-glyceraldehyde 3-phosphate and beta-D-fructose 6-phosphate from D-ribose 5-phosphate and D-xylulose 5-phosphate (non-oxidative stage): step 2/3. Functionally, transaldolase is important for the balance of metabolites in the pentose-phosphate pathway. This chain is Probable transaldolase, found in Methanococcus maripaludis (strain DSM 14266 / JCM 13030 / NBRC 101832 / S2 / LL).